Reading from the N-terminus, the 203-residue chain is Glycerol-3-phosphate acyltransferase (203 aa).

4 helical membrane-spanning segments follow: residues leucine 6–valine 26, alanine 82–phenylalanine 102, alanine 118–isoleucine 138, and tyrosine 141–aspartate 161.

Belongs to the PlsY family. In terms of assembly, probably interacts with PlsX.

Its subcellular location is the cell inner membrane. The catalysed reaction is an acyl phosphate + sn-glycerol 3-phosphate = a 1-acyl-sn-glycero-3-phosphate + phosphate. It participates in lipid metabolism; phospholipid metabolism. Catalyzes the transfer of an acyl group from acyl-phosphate (acyl-PO(4)) to glycerol-3-phosphate (G3P) to form lysophosphatidic acid (LPA). This enzyme utilizes acyl-phosphate as fatty acyl donor, but not acyl-CoA or acyl-ACP. This Shewanella putrefaciens (strain CN-32 / ATCC BAA-453) protein is Glycerol-3-phosphate acyltransferase.